A 417-amino-acid polypeptide reads, in one-letter code: Cobalamin binding intrinsic factor (417 aa).

Residues 1–22 (MAWFSLHLLHLLWAAAGTSTWA) form the signal peptide. 3 disulfide bridges follow: Cys26/Cys246, Cys103/Cys288, and Cys143/Cys182. The N-linked (GlcNAc...) asparagine glycan is linked to Asn100. Residue Asp171 coordinates cob(II)alamin. Ser191 bears the Phosphoserine mark. Asn209 carries N-linked (GlcNAc...) asparagine glycosylation. Asp222 and Gln270 together coordinate cob(II)alamin. Residues Asn311 and Asn330 are each glycosylated (N-linked (GlcNAc...) asparagine). Residues 365–370 (SWGLVV) and 386–395 (WQFLSGKTPL) each bind cob(II)alamin. Asn413 carries an N-linked (GlcNAc...) asparagine glycan.

This sequence belongs to the eukaryotic cobalamin transport proteins family. In terms of assembly, interacts with CUBN (via CUB domains).

Its subcellular location is the secreted. Functionally, promotes absorption of the essential vitamin cobalamin (Cbl) in the ileum. After interaction with CUBN, the CBLIF-cobalamin complex is internalized via receptor-mediated endocytosis. This Canis lupus familiaris (Dog) protein is Cobalamin binding intrinsic factor (CBLIF).